The chain runs to 572 residues: NADH-ubiquinone oxidoreductase chain 5 (572 aa).

Helical transmembrane passes span 6–26 (FFFL…YLMI), 44–64 (VVMT…VMYI), 86–106 (IMIV…PNLI), 107–127 (SILL…IYYQ), 147–167 (VAIL…YIYY), 179–201 (IITL…SSWL), 208–230 (PTPV…LLIR), 234–254 (MLMV…TMFM), 268–288 (IIAL…SMGY), 291–311 (LAFF…MCAG), 337–357 (SICF…AGFY), 372–394 (NFFI…FRLF), 422–442 (IGLL…IFPV), 454–474 (FLTL…SDFV), 479–499 (LFSL…FMPF), 524–544 (WGEL…INYI), and 552–572 (FKVY…LFFL).

It belongs to the complex I subunit 5 family.

Its subcellular location is the mitochondrion inner membrane. The catalysed reaction is a ubiquinone + NADH + 5 H(+)(in) = a ubiquinol + NAD(+) + 4 H(+)(out). In terms of biological role, core subunit of the mitochondrial membrane respiratory chain NADH dehydrogenase (Complex I) that is believed to belong to the minimal assembly required for catalysis. Complex I functions in the transfer of electrons from NADH to the respiratory chain. The immediate electron acceptor for the enzyme is believed to be ubiquinone. This Locusta migratoria (Migratory locust) protein is NADH-ubiquinone oxidoreductase chain 5 (ND5).